We begin with the raw amino-acid sequence, 324 residues long: Acetyl-coenzyme A carboxylase carboxyl transferase subunit alpha (324 aa).

Residues 37 to 291 (KLDKRLDRLK…QEYVLQEWLK (255 aa)) enclose the CoA carboxyltransferase C-terminal domain.

The protein belongs to the AccA family. In terms of assembly, acetyl-CoA carboxylase is a heterohexamer composed of biotin carboxyl carrier protein (AccB), biotin carboxylase (AccC) and two subunits each of ACCase subunit alpha (AccA) and ACCase subunit beta (AccD).

The protein resides in the cytoplasm. The catalysed reaction is N(6)-carboxybiotinyl-L-lysyl-[protein] + acetyl-CoA = N(6)-biotinyl-L-lysyl-[protein] + malonyl-CoA. It participates in lipid metabolism; malonyl-CoA biosynthesis; malonyl-CoA from acetyl-CoA: step 1/1. Functionally, component of the acetyl coenzyme A carboxylase (ACC) complex. First, biotin carboxylase catalyzes the carboxylation of biotin on its carrier protein (BCCP) and then the CO(2) group is transferred by the carboxyltransferase to acetyl-CoA to form malonyl-CoA. This Chlamydia trachomatis serovar D (strain ATCC VR-885 / DSM 19411 / UW-3/Cx) protein is Acetyl-coenzyme A carboxylase carboxyl transferase subunit alpha.